Here is a 315-residue protein sequence, read N- to C-terminus: Ribose-phosphate pyrophosphokinase (315 aa).

Residues 37-39 and 96-97 contribute to the ATP site; these read DGE and RQ. Residues histidine 131 and aspartate 170 each coordinate Mg(2+). Lysine 194 is an active-site residue. Residues arginine 196, aspartate 220, and 224-228 contribute to the D-ribose 5-phosphate site; that span reads DTGGT.

This sequence belongs to the ribose-phosphate pyrophosphokinase family. Class I subfamily. As to quaternary structure, homohexamer. Mg(2+) is required as a cofactor.

Its subcellular location is the cytoplasm. The catalysed reaction is D-ribose 5-phosphate + ATP = 5-phospho-alpha-D-ribose 1-diphosphate + AMP + H(+). Its pathway is metabolic intermediate biosynthesis; 5-phospho-alpha-D-ribose 1-diphosphate biosynthesis; 5-phospho-alpha-D-ribose 1-diphosphate from D-ribose 5-phosphate (route I): step 1/1. Involved in the biosynthesis of the central metabolite phospho-alpha-D-ribosyl-1-pyrophosphate (PRPP) via the transfer of pyrophosphoryl group from ATP to 1-hydroxyl of ribose-5-phosphate (Rib-5-P). This Escherichia coli O6:H1 (strain CFT073 / ATCC 700928 / UPEC) protein is Ribose-phosphate pyrophosphokinase.